The sequence spans 413 residues: BEN domain-containing protein 7 (413 aa).

Residues Lys16, Lys56, and Lys85 each participate in a glycyl lysine isopeptide (Lys-Gly) (interchain with G-Cter in SUMO2) cross-link. Residues 78-88 are compositionally biased toward basic and acidic residues; it reads GKEGEKLKEEP. Disordered regions lie at residues 78-153 and 208-243; these read GKEG…GELP and RTAV…MEKK. Composition is skewed to polar residues over residues 99 to 111 and 121 to 153; these read LNSS…SLHP and PPQS…GELP. Basic residues predominate over residues 211-222; sequence VSRKRNKKKKVP. Over residues 223-232 the composition is skewed to low complexity; the sequence is PKTVEPLTVK. A Glycyl lysine isopeptide (Lys-Gly) (interchain with G-Cter in SUMO2) cross-link involves residue Lys243. A BEN domain is found at 287–392; it reads GFDVFMPKSQ…IKLARRRLKR (106 aa). Residue Thr324 is modified to Phosphothreonine. Ser328 carries the phosphoserine modification.

The sequence is that of BEN domain-containing protein 7 (BEND7) from Homo sapiens (Human).